Here is a 539-residue protein sequence, read N- to C-terminus: MAKIINFNDEARKKLEIGVNTLADAVKVTLGPRGRNVVLEKSYGAPLITNDGVTIAKEIELEDPFENMGAALVKEVAIKSNDVAGDGTTTATILAQAIVKEGLKMLSAGANPIFLKKGIELAAKEAVEVLKDKAKKIESNEEISQVASISAGDEEIGKLIAQAMAKVGETGVITVEEAKSLETTLEIVEGMQFDKGYVSPYMVTDSERMTAELDNPLILLTDKKISSMKELLPLLEQTVQMSKPVLIVADDIEGEALTTLVINKLRGTLNVVAVKAPAFGDRRKAILEDIAILTGGEVISEEKGMKLEEATIEQLGKAKTVKVTKDLTVIVDGGGQQKDISARVNSIKAQIAETTSDYDKEKLQERLAKLSGGVAVIKVGAATEVEMKDKKLRIEDALNATRAAVEEGIVAGGGTILLDIIESMKDFNETDEIAMGIEIVKRALEAPIKQIAENCGLNGGVVLEKVRMSPKGFGFDAKNEKYVNMIESGIIDPAKVTRAAIQNSTSVASLLLTTEVVIANKKEEEKAPMGAGGMMPGMM.

Residues 29–32 (TLGP), 86–90 (DGTTT), Gly413, and Asp492 contribute to the ATP site.

It belongs to the chaperonin (HSP60) family. In terms of assembly, forms a cylinder of 14 subunits composed of two heptameric rings stacked back-to-back. Interacts with the co-chaperonin GroES.

It is found in the cytoplasm. The enzyme catalyses ATP + H2O + a folded polypeptide = ADP + phosphate + an unfolded polypeptide.. Its function is as follows. Together with its co-chaperonin GroES, plays an essential role in assisting protein folding. The GroEL-GroES system forms a nano-cage that allows encapsulation of the non-native substrate proteins and provides a physical environment optimized to promote and accelerate protein folding. The sequence is that of Chaperonin GroEL from Fusobacterium nucleatum subsp. nucleatum (strain ATCC 25586 / DSM 15643 / BCRC 10681 / CIP 101130 / JCM 8532 / KCTC 2640 / LMG 13131 / VPI 4355).